Reading from the N-terminus, the 138-residue chain is ATP synthase epsilon chain (138 aa).

It belongs to the ATPase epsilon chain family. In terms of assembly, F-type ATPases have 2 components, CF(1) - the catalytic core - and CF(0) - the membrane proton channel. CF(1) has five subunits: alpha(3), beta(3), gamma(1), delta(1), epsilon(1). CF(0) has three main subunits: a, b and c.

The protein localises to the cell inner membrane. Produces ATP from ADP in the presence of a proton gradient across the membrane. This Endomicrobium trichonymphae protein is ATP synthase epsilon chain.